The chain runs to 231 residues: Large ribosomal subunit protein uL1 (231 aa).

Belongs to the universal ribosomal protein uL1 family. Part of the 50S ribosomal subunit.

Its function is as follows. Binds directly to 23S rRNA. The L1 stalk is quite mobile in the ribosome, and is involved in E site tRNA release. Functionally, protein L1 is also a translational repressor protein, it controls the translation of the L11 operon by binding to its mRNA. In Pseudomonas fluorescens (strain Pf0-1), this protein is Large ribosomal subunit protein uL1.